Here is a 64-residue protein sequence, read N- to C-terminus: Large ribosomal subunit protein bL35 (64 aa).

The protein belongs to the bacterial ribosomal protein bL35 family.

The sequence is that of Large ribosomal subunit protein bL35 from Shewanella frigidimarina (strain NCIMB 400).